A 311-amino-acid polypeptide reads, in one-letter code: T-cell acute lymphocytic leukemia protein 1 homolog (311 aa).

Pro residues predominate over residues 1–14 (MTMDRPPAPPPPSS). Residues 1–67 (MTMDRPPAPP…RPSPGPPAAA (67 aa)) are disordered. Positions 15–25 (DPRDARRHDPE) are enriched in basic and acidic residues. Positions 179–231 (VRRIFTNSRERWRQQNVNGAFAELRKLIPTHPPDKKLSKNEILRLAMKYINFL) constitute a bHLH domain. The disordered stretch occupies residues 265 to 311 (SPNSSCGSSLDGAASPDSFTEEHDTLDSKHARNLHHAILPVEGSAQR). Basic and acidic residues predominate over residues 284 to 294 (TEEHDTLDSKH).

Efficient DNA binding requires dimerization with another bHLH protein. Forms heterodimers with TCF3. In terms of processing, phosphorylated on serine residues.

Its subcellular location is the nucleus. Its function is as follows. Implicated in the genesis of hemopoietic malignancies. It may play an important role in hemopoietic differentiation. This is T-cell acute lymphocytic leukemia protein 1 homolog (TAL1) from Gallus gallus (Chicken).